We begin with the raw amino-acid sequence, 249 residues long: 2,3,4,5-tetrahydropyridine-2,6-dicarboxylate N-acetyltransferase (249 aa).

The protein belongs to the transferase hexapeptide repeat family. DapH subfamily.

It catalyses the reaction (S)-2,3,4,5-tetrahydrodipicolinate + acetyl-CoA + H2O = L-2-acetamido-6-oxoheptanedioate + CoA. It participates in amino-acid biosynthesis; L-lysine biosynthesis via DAP pathway; LL-2,6-diaminopimelate from (S)-tetrahydrodipicolinate (acetylase route): step 1/3. Functionally, catalyzes the transfer of an acetyl group from acetyl-CoA to tetrahydrodipicolinate. The chain is 2,3,4,5-tetrahydropyridine-2,6-dicarboxylate N-acetyltransferase from Fervidobacterium nodosum (strain ATCC 35602 / DSM 5306 / Rt17-B1).